The sequence spans 181 residues: Adenylate kinase (181 aa).

10-15 (GAGKGT) is an ATP binding site. Positions 30–59 (STGELFRRNIEEGTKLGVEAKRYLDAGDLV) are NMP. AMP is bound by residues Thr31, Arg36, 57-59 (DLV), 85-88 (GYPR), and Gln92. Positions 126–132 (GRGRADD) are LID. Residue Arg127 coordinates ATP. Residues Arg129 and Arg140 each contribute to the AMP site. Residue Gly166 coordinates ATP.

This sequence belongs to the adenylate kinase family. Monomer.

Its subcellular location is the cytoplasm. It catalyses the reaction AMP + ATP = 2 ADP. The protein operates within purine metabolism; AMP biosynthesis via salvage pathway; AMP from ADP: step 1/1. Catalyzes the reversible transfer of the terminal phosphate group between ATP and AMP. Plays an important role in cellular energy homeostasis and in adenine nucleotide metabolism. This is Adenylate kinase from Mycobacterium tuberculosis (strain ATCC 25177 / H37Ra).